The sequence spans 511 residues: N-acetylgalactosamine-6-O-sulfatase (511 aa).

S83 carries the post-translational modification 3-oxoalanine (Ser).

The protein belongs to the sulfatase family. The conversion to 3-oxoalanine (also known as C-formylglycine, FGly), of a serine or cysteine residue in prokaryotes and of a cysteine residue in eukaryotes, is critical for catalytic activity.

Exosulfatase involved in the degradation of the glycosaminoglycans (GAGs) chondroitin sulfate (CS) and dermatan sulfate (DS). Catalyzes the hydrolysis of the 6-sulfate groups of the N-acetyl-D-galactosamine 6-sulfate units. GAG-specific sulfatases play a key role in the persistence of the major human gut symbiont B.thetaiotaomicron in the host gastrointestinal tract. This Bacteroides thetaiotaomicron (strain ATCC 29148 / DSM 2079 / JCM 5827 / CCUG 10774 / NCTC 10582 / VPI-5482 / E50) protein is N-acetylgalactosamine-6-O-sulfatase.